The chain runs to 360 residues: S-adenosylmethionine:tRNA ribosyltransferase-isomerase (360 aa).

Belongs to the QueA family. In terms of assembly, monomer.

It is found in the cytoplasm. It carries out the reaction 7-aminomethyl-7-carbaguanosine(34) in tRNA + S-adenosyl-L-methionine = epoxyqueuosine(34) in tRNA + adenine + L-methionine + 2 H(+). The protein operates within tRNA modification; tRNA-queuosine biosynthesis. Transfers and isomerizes the ribose moiety from AdoMet to the 7-aminomethyl group of 7-deazaguanine (preQ1-tRNA) to give epoxyqueuosine (oQ-tRNA). The chain is S-adenosylmethionine:tRNA ribosyltransferase-isomerase from Burkholderia pseudomallei (strain K96243).